A 141-amino-acid polypeptide reads, in one-letter code: MALERTLSIIKPDAVAKNVIGQIYSRFENAGLKIVAARMAHLSRADAEKFYAVHAERPFFKDLVEFMISGPVMIQVLEGEDAILKNRDLMGATDPKKAEKGTIRADFADSIDANAVHGSDAPETARVEIAFFFPEMNVYSR.

Residues lysine 11, phenylalanine 59, arginine 87, threonine 93, arginine 104, and asparagine 114 each contribute to the ATP site. Histidine 117 acts as the Pros-phosphohistidine intermediate in catalysis.

It belongs to the NDK family. Homotetramer. The cofactor is Mg(2+).

It is found in the cytoplasm. The catalysed reaction is a 2'-deoxyribonucleoside 5'-diphosphate + ATP = a 2'-deoxyribonucleoside 5'-triphosphate + ADP. It catalyses the reaction a ribonucleoside 5'-diphosphate + ATP = a ribonucleoside 5'-triphosphate + ADP. Major role in the synthesis of nucleoside triphosphates other than ATP. The ATP gamma phosphate is transferred to the NDP beta phosphate via a ping-pong mechanism, using a phosphorylated active-site intermediate. The sequence is that of Nucleoside diphosphate kinase from Burkholderia thailandensis (strain ATCC 700388 / DSM 13276 / CCUG 48851 / CIP 106301 / E264).